Consider the following 68-residue polypeptide: Large ribosomal subunit protein uL29 (68 aa).

Belongs to the universal ribosomal protein uL29 family.

The chain is Large ribosomal subunit protein uL29 from Bradyrhizobium diazoefficiens (strain JCM 10833 / BCRC 13528 / IAM 13628 / NBRC 14792 / USDA 110).